A 352-amino-acid chain; its full sequence is C-X-C chemokine receptor type 4 (352 aa).

The segment at 1-21 (MEGISIYTSDNYTEEMGSGDY) is important for chemokine binding and signaling. The Extracellular segment spans residues 1-38 (MEGISIYTSDNYTEEMGSGDYDSIKEPCFREENAHFNR). The residue at position 7 (Tyr-7) is a Sulfotyrosine. Asn-11 is a glycosylation site (N-linked (GlcNAc...) asparagine). At Tyr-12 the chain carries Sulfotyrosine. Ser-18 carries an O-linked (Xyl...) (chondroitin sulfate) serine glycan. Tyr-21 bears the Sulfotyrosine mark. 2 disulfides stabilise this stretch: Cys-28-Cys-274 and Cys-109-Cys-186. Residues 39–63 (IFLPTIYSIIFLTGIVGNGLVILVM) traverse the membrane as a helical segment. The Cytoplasmic segment spans residues 64–77 (GYQKKLRSMTDKYR). The chain crosses the membrane as a helical span at residues 78-99 (LHLSVADLLFVITLPFWAVDAV). Positions 94-97 (WAVD) are chemokine binding. The Extracellular segment spans residues 100–110 (ANWYFGNFLCK). A helical transmembrane segment spans residues 111 to 130 (AVHVIYTVNLYSSVLILAFI). A chemokine binding region spans residues 113-117 (HVIYT). The Cytoplasmic segment spans residues 131–154 (SLDRYLAIVHATNSQKPRKLLAEK). The short motif at 133–135 (DRY) is the Important for signaling element. The segment at 135–147 (YLAIVHATNSQKP) is involved in dimerization; when bound to chemokine. The helical transmembrane segment at 155–174 (VVYVGVWIPALLLTIPDFIF) threads the bilayer. Residues 175–195 (ASVSEADDRYICDRFYPNDLW) lie on the Extracellular side of the membrane. Residues 186-190 (CDRFY) form a chemokine binding, important for signaling region. Residues 191–210 (PNDLWVVVFQFQHIMVGLIL) are involved in dimerization. The chain crosses the membrane as a helical span at residues 196 to 216 (VVVFQFQHIMVGLILPGIDIL). Topologically, residues 217 to 241 (SCYCIIISKLSHSKGHQKRKALKTT) are cytoplasmic. A helical transmembrane segment spans residues 242–261 (VILILAFFACWLPYYIGISI). Over 262 to 282 (DSFILLEIIKQGCEFENTVHK) the chain is Extracellular. The segment at 266–268 (LLE) is involved in dimerization. A helical membrane pass occupies residues 283 to 302 (WISITEALAFFHCCLNPILY). Topologically, residues 303-352 (AFLGAKFKTSAQHALTSVSRGSSLKILSKGKRGGHSSVSTESESSSFHSS) are cytoplasmic. Phosphoserine occurs at positions 319 and 321. Phosphoserine; by PKC and GRK6 is present on residues Ser-324 and Ser-325. The segment at 329–352 (LSKGKRGGHSSVSTESESSSFHSS) is disordered. Ser-330 carries the phosphoserine; by GRK6 modification. A Glycyl lysine isopeptide (Lys-Gly) (interchain with G-Cter in ubiquitin) cross-link involves residue Lys-331. The span at 337–352 (HSSVSTESESSSFHSS) shows a compositional bias: low complexity. Ser-339 is subject to Phosphoserine; by GRK6. Phosphoserine occurs at positions 348 and 351.

Belongs to the G-protein coupled receptor 1 family. Monomer. Can form homodimers. Interacts with CD164. Interacts with ARRB2; the interaction is dependent on the C-terminal phosphorylation of CXCR4 and allows activation of MAPK1 and MAPK3. Interacts with ARR3; the interaction is dependent on the C-terminal phosphorylation of CXCR4 and modulates calcium mobilization. Interacts with RNF113A; the interaction, enhanced by CXCL12, promotes CXCR4 ubiquitination and subsequent degradation. Interacts (via the cytoplasmic C-terminal) with ITCH (via the WW domains I and II); the interaction, enhanced by CXCL12, promotes CXCR4 ubiquitination and leads to its degradation. Interacts with extracellular ubiquitin. Interacts with DBN1; this interaction is enhanced by antigenic stimulation. Following LPS binding, may form a complex with GDF5, HSP90AA1 and HSPA8. In terms of processing, phosphorylated on agonist stimulation. Rapidly phosphorylated on serine and threonine residues in the C-terminal. Phosphorylation at Ser-324 and Ser-325 leads to recruitment of ITCH, ubiquitination and protein degradation. Ubiquitinated after ligand binding, leading to its degradation. Ubiquitinated by ITCH at the cell membrane on agonist stimulation. The ubiquitin-dependent mechanism, endosomal sorting complex required for transport (ESCRT), then targets CXCR4 for lysosomal degradation. This process is dependent also on prior Ser-/Thr-phosphorylation in the C-terminal of CXCR4. Also binding of ARRB1 to STAM negatively regulates CXCR4 sorting to lysosomes though modulating ubiquitination of SFR5S. Post-translationally, sulfation is required for efficient binding of CXCL12/SDF-1alpha and promotes its dimerization. In terms of processing, O- and N-glycosylated. N-glycosylation can mask coreceptor function. The O-glycosylation chondroitin sulfate attachment does not affect interaction with CXCL12/SDF-1alpha nor its coreceptor activity.

It localises to the cell membrane. It is found in the cell junction. The protein localises to the early endosome. Its subcellular location is the late endosome. The protein resides in the lysosome. Receptor for the C-X-C chemokine CXCL12/SDF-1 that transduces a signal by increasing intracellular calcium ion levels and enhancing MAPK1/MAPK3 activation. Involved in the AKT signaling cascade. Plays a role in regulation of cell migration, e.g. during wound healing. Acts as a receptor for extracellular ubiquitin; leading to enhanced intracellular calcium ions and reduced cellular cAMP levels. Binds bacterial lipopolysaccharide (LPS) et mediates LPS-induced inflammatory response, including TNF secretion by monocytes. Involved in hematopoiesis and in cardiac ventricular septum formation. Also plays an essential role in vascularization of the gastrointestinal tract, probably by regulating vascular branching and/or remodeling processes in endothelial cells. Involved in cerebellar development. In the CNS, could mediate hippocampal-neuron survival. In Macaca mulatta (Rhesus macaque), this protein is C-X-C chemokine receptor type 4 (CXCR4).